The chain runs to 627 residues: Alpha-terpineol synthase, chloroplastic (627 aa).

Residues 1 to 53 constitute a chloroplast transit peptide; that stretch reads MAGITGVMNMKLAARPSSGRHSRGCRPAVVPSAGKQMLLVRRHPPGSASWPTR. Positions 13–90 are disordered; the sequence is AARPSSGRHS…EDRASRNTSS (78 aa). 5 residues coordinate (2E)-geranyl diphosphate: Arg-339, Asp-376, Asp-380, Arg-518, and Asp-521. Asp-376 and Asp-380 together coordinate Mg(2+). The DDXXD motif signature appears at 376–380; that stretch reads DDTYD. The Mg(2+) site is built by Asp-521, Ser-525, and Glu-529.

The protein belongs to the terpene synthase family. Tpsb subfamily. In terms of assembly, monomer. Requires Mg(2+) as cofactor. The cofactor is Mn(2+). Expressed in seedling leaf sheaths and roots.

The protein localises to the plastid. The protein resides in the chloroplast. It carries out the reaction (2E)-geranyl diphosphate + H2O = (S)-alpha-terpineol + diphosphate. It catalyses the reaction (2E)-geranyl diphosphate = (4S)-limonene + diphosphate. The enzyme catalyses (2E)-geranyl diphosphate = gamma-terpinene + diphosphate. The catalysed reaction is (2E)-geranyl diphosphate = beta-myrcene + diphosphate. It carries out the reaction (2E)-geranyl diphosphate = terpinolene + diphosphate. It catalyses the reaction (2E)-geranyl diphosphate + H2O = 4-terpineol + diphosphate. The protein operates within secondary metabolite biosynthesis; terpenoid biosynthesis. Component of the volatile terpenes biosynthesis pathways. Mediates the synthesis of a blend of monoterpenes. Converts mainly geranyl diphosphate to alpha-terpineol. Also triggers the biosynthesis of minor monoterpenes including limonene, gamma-terpinene, beta-myrcene, terpinolene and 4-terpineol. This chain is Alpha-terpineol synthase, chloroplastic, found in Zea mays (Maize).